The following is a 250-amino-acid chain: S-adenosyl-L-methionine-dependent 2-deoxy-scyllo-inosamine dehydrogenase (250 aa).

Cys-16, Cys-20, Cys-23, Cys-169, Cys-187, and Glu-223 together coordinate [4Fe-4S] cluster.

Belongs to the radical SAM superfamily. The cofactor is [4Fe-4S] cluster.

The catalysed reaction is 2-deoxy-scyllo-inosamine + S-adenosyl-L-methionine = 3-amino-2,3-dideoxy-scyllo-inosose + 5'-deoxyadenosine + L-methionine + H(+). It functions in the pathway antibiotic biosynthesis; butirosin biosynthesis. In terms of biological role, catalyzes the radical S-adenosyl-L-methionine (SAM)-dependent two-electron oxidation of 2-deoxy-scyllo-inosamine (DOIA) to amino-dideoxy-scyllo-inosose (amino-DOI) in the biosynthetic pathway of butirosin. The sequence is that of S-adenosyl-L-methionine-dependent 2-deoxy-scyllo-inosamine dehydrogenase (btrN) from Niallia circulans (Bacillus circulans).